A 432-amino-acid polypeptide reads, in one-letter code: MSKSADLFAKAQKIIPGGVNSPVRAFAGVGGSPLFIERADGAYIFDADGKAYIDYVGSWGPMILGHNHVAVRDAVIKAAQQGLSFGAPTEMEITMAELVSKLVPSMEQIRMVSSGTEATMSAIRLARGFTNRDKIIKFEGCYHGHADCLLVKAGSGALTLGQPNSPGVPADFAKHTLTCTYNDLETVREAFAAHPEQIACIIVEPVAGNMNCIPPVPGFLEGLRTICDDFGALLILDEVMTGFRVSEGGAQGYYNIKPDLTTLGKIIGGGMPVGAFGGRKDIMQYIAPTGPVYQAGTLSGNPVAMAAGHACLSVLTEEGNEKRLANTTKILANGFKSLADKYNIPLAINQVGGMFGFFFTEQKTVTSYADVTKCDIERFKRFFNLMLKSGVYLAPSAYEACFTSLAHGDKEIEATLNAAERAFATLAKEANA.

An N6-(pyridoxal phosphate)lysine modification is found at K265.

It belongs to the class-III pyridoxal-phosphate-dependent aminotransferase family. HemL subfamily. As to quaternary structure, homodimer. It depends on pyridoxal 5'-phosphate as a cofactor.

Its subcellular location is the cytoplasm. It catalyses the reaction (S)-4-amino-5-oxopentanoate = 5-aminolevulinate. The protein operates within porphyrin-containing compound metabolism; protoporphyrin-IX biosynthesis; 5-aminolevulinate from L-glutamyl-tRNA(Glu): step 2/2. This Photobacterium profundum (strain SS9) protein is Glutamate-1-semialdehyde 2,1-aminomutase.